Consider the following 449-residue polypeptide: NADH-quinone oxidoreductase subunit D (449 aa).

It belongs to the complex I 49 kDa subunit family. As to quaternary structure, NDH-1 is composed of 14 different subunits. Subunits NuoB, C, D, E, F, and G constitute the peripheral sector of the complex.

The protein localises to the cell membrane. The catalysed reaction is a quinone + NADH + 5 H(+)(in) = a quinol + NAD(+) + 4 H(+)(out). Its function is as follows. NDH-1 shuttles electrons from NADH, via FMN and iron-sulfur (Fe-S) centers, to quinones in the respiratory chain. The immediate electron acceptor for the enzyme in this species is believed to be a menaquinone. Couples the redox reaction to proton translocation (for every two electrons transferred, four hydrogen ions are translocated across the cytoplasmic membrane), and thus conserves the redox energy in a proton gradient. This chain is NADH-quinone oxidoreductase subunit D, found in Saccharopolyspora erythraea (strain ATCC 11635 / DSM 40517 / JCM 4748 / NBRC 13426 / NCIMB 8594 / NRRL 2338).